A 387-amino-acid polypeptide reads, in one-letter code: Chaperone protein DnaJ (387 aa).

The J domain maps to 5-70 (DYYEVLGVAK…QKRAAYDRFG (66 aa)). A CR-type zinc finger spans residues 140–218 (GKTETIRLPT…CGGAGRVTRE (79 aa)). Cys-153, Cys-156, Cys-170, Cys-173, Cys-192, Cys-195, Cys-206, and Cys-209 together coordinate Zn(2+). CXXCXGXG motif repeat units lie at residues 153-160 (CEVCAGSG), 170-177 (CPTCGGYG), 192-199 (CPNCQGRG), and 206-213 (CAACGGAG).

It belongs to the DnaJ family. As to quaternary structure, homodimer. Zn(2+) is required as a cofactor.

Its subcellular location is the cytoplasm. Its function is as follows. Participates actively in the response to hyperosmotic and heat shock by preventing the aggregation of stress-denatured proteins and by disaggregating proteins, also in an autonomous, DnaK-independent fashion. Unfolded proteins bind initially to DnaJ; upon interaction with the DnaJ-bound protein, DnaK hydrolyzes its bound ATP, resulting in the formation of a stable complex. GrpE releases ADP from DnaK; ATP binding to DnaK triggers the release of the substrate protein, thus completing the reaction cycle. Several rounds of ATP-dependent interactions between DnaJ, DnaK and GrpE are required for fully efficient folding. Also involved, together with DnaK and GrpE, in the DNA replication of plasmids through activation of initiation proteins. This chain is Chaperone protein DnaJ, found in Methylobacterium sp. (strain 4-46).